A 307-amino-acid polypeptide reads, in one-letter code: Mycothiol acetyltransferase (307 aa).

2 consecutive N-acetyltransferase domains span residues 12–152 (TRTD…APIP) and 160–307 (VTLR…YQRS). Position 43 (E43) interacts with 1D-myo-inositol 2-(L-cysteinylamino)-2-deoxy-alpha-D-glucopyranoside. Position 87–89 (87–89 (LAV)) interacts with acetyl-CoA. 1D-myo-inositol 2-(L-cysteinylamino)-2-deoxy-alpha-D-glucopyranoside is bound by residues E187, K227, and E239. Acetyl-CoA-binding positions include 243 to 245 (LGV) and 250 to 256 (HGGGLGK). A 1D-myo-inositol 2-(L-cysteinylamino)-2-deoxy-alpha-D-glucopyranoside-binding site is contributed by Y278.

It belongs to the acetyltransferase family. MshD subfamily. As to quaternary structure, monomer.

The catalysed reaction is 1D-myo-inositol 2-(L-cysteinylamino)-2-deoxy-alpha-D-glucopyranoside + acetyl-CoA = mycothiol + CoA + H(+). Its function is as follows. Catalyzes the transfer of acetyl from acetyl-CoA to desacetylmycothiol (Cys-GlcN-Ins) to form mycothiol. This is Mycothiol acetyltransferase from Salinispora arenicola (strain CNS-205).